A 468-amino-acid chain; its full sequence is V-type proton ATPase subunit S1 (468 aa).

The signal sequence occupies residues 1-35; it reads MMAATAAAQVRAGTRWAPALCRMPWLPLMLVAAAA. Residues 36–228 constitute a propeptide that is removed on maturation; the sequence is ATSEQQVPLV…TAVRPSRVAR (193 aa). At 36-417 the chain is on the lumenal side; the sequence is ATSEQQVPLV…KKFSYASDCA (382 aa). 8 N-linked (GlcNAc...) asparagine glycosylation sites follow: Asn-167, Asn-258, Asn-271, Asn-294, Asn-301, Asn-348, Asn-355, and Asn-404. Cys-369 and Cys-416 form a disulfide bridge. Residues 418–438 form a helical membrane-spanning segment; that stretch reads GFFSPGIWMGLLTSLFMLFIF. Topologically, residues 439–468 are cytoplasmic; sequence TYGLHMILSLKTMDRFDDHKGPTITLTQIV.

The protein belongs to the vacuolar ATPase subunit S1 family. Accessory component of the multisubunit proton-transporting vacuolar (V)-ATPase protein pump. Interacts (via N-terminus) with ATP6AP2 (via N-terminus). Interacts with RNASEK. Interacts with TMEM106B (via C-terminus). In terms of processing, N-glycosylated.

It is found in the endoplasmic reticulum membrane. Its subcellular location is the endoplasmic reticulum-Golgi intermediate compartment membrane. It localises to the cytoplasmic vesicle. The protein resides in the secretory vesicle. The protein localises to the synaptic vesicle membrane. It is found in the clathrin-coated vesicle membrane. Functionally, accessory subunit of the proton-transporting vacuolar (V)-ATPase protein pump, which is required for luminal acidification of secretory vesicles. Guides the V-type ATPase into specialized subcellular compartments, such as neuroendocrine regulated secretory vesicles or the ruffled border of the osteoclast, thereby regulating its activity. Involved in membrane trafficking and Ca(2+)-dependent membrane fusion. May play a role in the assembly of the V-type ATPase complex. In aerobic conditions, involved in intracellular iron homeostasis, thus triggering the activity of Fe(2+) prolyl hydroxylase (PHD) enzymes, and leading to HIF1A hydroxylation and subsequent proteasomal degradation. In islets of Langerhans cells, may regulate the acidification of dense-core secretory granules. This Bos taurus (Bovine) protein is V-type proton ATPase subunit S1 (ATP6AP1).